Reading from the N-terminus, the 402-residue chain is NADH-quinone oxidoreductase subunit D (402 aa).

The protein belongs to the complex I 49 kDa subunit family. As to quaternary structure, NDH-1 is composed of 14 different subunits. Subunits NuoB, C, D, E, F, and G constitute the peripheral sector of the complex.

Its subcellular location is the cell inner membrane. It carries out the reaction a quinone + NADH + 5 H(+)(in) = a quinol + NAD(+) + 4 H(+)(out). Functionally, NDH-1 shuttles electrons from NADH, via FMN and iron-sulfur (Fe-S) centers, to quinones in the respiratory chain. The immediate electron acceptor for the enzyme in this species is believed to be ubiquinone. Couples the redox reaction to proton translocation (for every two electrons transferred, four hydrogen ions are translocated across the cytoplasmic membrane), and thus conserves the redox energy in a proton gradient. In Protochlamydia amoebophila (strain UWE25), this protein is NADH-quinone oxidoreductase subunit D.